The sequence spans 81 residues: uncharacterized protein (81 aa).

This is an uncharacterized protein from Saccharomyces cerevisiae (strain ATCC 204508 / S288c) (Baker's yeast).